Consider the following 399-residue polypeptide: S-adenosylmethionine synthase (399 aa).

Residue His-17 coordinates ATP. A Mg(2+)-binding site is contributed by Asp-19. Residue Glu-45 coordinates K(+). L-methionine is bound by residues Glu-58 and Gln-101. A flexible loop region spans residues 101–111; the sequence is QSPDIAQGVDE. Residues 177–179, 244–245, Asp-253, 259–260, Ala-276, and Lys-280 contribute to the ATP site; these read DAK, RF, and RK. Asp-253 provides a ligand contact to L-methionine. Lys-284 contributes to the L-methionine binding site.

The protein belongs to the AdoMet synthase family. Homotetramer; dimer of dimers. It depends on Mg(2+) as a cofactor. The cofactor is K(+).

It is found in the cytoplasm. It carries out the reaction L-methionine + ATP + H2O = S-adenosyl-L-methionine + phosphate + diphosphate. Its pathway is amino-acid biosynthesis; S-adenosyl-L-methionine biosynthesis; S-adenosyl-L-methionine from L-methionine: step 1/1. In terms of biological role, catalyzes the formation of S-adenosylmethionine (AdoMet) from methionine and ATP. The overall synthetic reaction is composed of two sequential steps, AdoMet formation and the subsequent tripolyphosphate hydrolysis which occurs prior to release of AdoMet from the enzyme. This Listeria welshimeri serovar 6b (strain ATCC 35897 / DSM 20650 / CCUG 15529 / CIP 8149 / NCTC 11857 / SLCC 5334 / V8) protein is S-adenosylmethionine synthase.